We begin with the raw amino-acid sequence, 451 residues long: tRNA modification GTPase MnmE (451 aa).

3 residues coordinate (6S)-5-formyl-5,6,7,8-tetrahydrofolate: Arg-25, Glu-82, and Lys-121. Positions 217-374 (GMSVVILGRP…LKQHLKTEMG (158 aa)) constitute a TrmE-type G domain. Asn-227 serves as a coordination point for K(+). Residues 227-232 (NAGKSS), 246-252 (TDIAGTT), and 271-274 (DTAG) contribute to the GTP site. Position 231 (Ser-231) interacts with Mg(2+). Residues Thr-246, Ile-248, and Thr-251 each coordinate K(+). Mg(2+) is bound at residue Thr-252. (6S)-5-formyl-5,6,7,8-tetrahydrofolate is bound at residue Lys-451.

It belongs to the TRAFAC class TrmE-Era-EngA-EngB-Septin-like GTPase superfamily. TrmE GTPase family. In terms of assembly, homodimer. Heterotetramer of two MnmE and two MnmG subunits. The cofactor is K(+).

It is found in the cytoplasm. Exhibits a very high intrinsic GTPase hydrolysis rate. Involved in the addition of a carboxymethylaminomethyl (cmnm) group at the wobble position (U34) of certain tRNAs, forming tRNA-cmnm(5)s(2)U34. This Hydrogenovibrio crunogenus (strain DSM 25203 / XCL-2) (Thiomicrospira crunogena) protein is tRNA modification GTPase MnmE.